The sequence spans 395 residues: MSGNLQREALLKEFENAGKMIHAFDTAPEGNGEEDTITELPVVKNPGLGVSSETKAENMEDTGFPRWTEFFAKNETVSLPNRNFTFNTYFQVPEVNSSDLSSIPIFLAHHGAGSTGLTFAPLAKTLKEDLGTNFGFFSFDARGHGETKPLDPTDVTYYLNDFVTDFVELIVWFYENYLKACKQSKLSLILVGHSLGGSVCANLYEHLPEYIKRHTTGLAMLDIVEEMAKFVLTKVDHFLSVTPNVFGSAKEAVDWYQSHNYSKLKESAEISVPALFHKAKSGKVVRITNLASFKPYWDSWFDGLSAKFVSLPTSKLLILAGNDNLDKELIVGQMQGKYQLIVFQDSGHFIQEDVPKKAAISLVDFWKRSDNRNVTIKTNWGSSQNKTLEGKKTVE.

Active-site residues include Ser194, Asp222, and His348.

It belongs to the AB hydrolase superfamily.

The enzyme catalyses [phosphatase 2A protein]-C-terminal L-leucine methyl ester + H2O = [phosphatase 2A protein]-C-terminal L-leucine + methanol + H(+). Its function is as follows. Demethylates proteins that have been reversibly carboxymethylated. Demethylates the phosphatase PP2A catalytic subunit. This Kluyveromyces lactis (strain ATCC 8585 / CBS 2359 / DSM 70799 / NBRC 1267 / NRRL Y-1140 / WM37) (Yeast) protein is Protein phosphatase methylesterase 1 (PPE1).